We begin with the raw amino-acid sequence, 107 residues long: MGVEITIIKEGKGNIPPVGSNVTVHHAGTLTNGTVFDSSRKRGQPFNFKLGAGQVIKGWDEGVAKMKVGETSKLTISPDFGYGARGAGGVIPPNATLVFEVELITFK.

In terms of domain architecture, PPIase FKBP-type spans 19–107 (GSNVTVHHAG…VFEVELITFK (89 aa)).

Belongs to the FKBP-type PPIase family.

The enzyme catalyses [protein]-peptidylproline (omega=180) = [protein]-peptidylproline (omega=0). With respect to regulation, inhibited by both FK506 and rapamycin. Its function is as follows. PPIases accelerate the folding of proteins by catalyzing the cis-trans isomerization of proline imidic peptide bonds in oligopeptides. The chain is FK506-binding protein 1 (fkbp1) from Dictyostelium discoideum (Social amoeba).